Consider the following 731-residue polypeptide: Polyribonucleotide nucleotidyltransferase (731 aa).

Mg(2+)-binding residues include Asp488 and Asp494. Residues 555–614 (PRIEVINIAVDKIRDVIGSGGKVIREIVEQTGAKINIEDDGTIKIASADAKTIEAAKRWI) enclose the KH domain. Residues 624-692 (GAIYQGTVVK…ERGKVRLSMK (69 aa)) enclose the S1 motif domain. The interval 693–731 (AVDQKTGKEMTDDKSVKEEKCMDEKKQPENKRRRKKKEE) is disordered. Basic and acidic residues predominate over residues 694-722 (VDQKTGKEMTDDKSVKEEKCMDEKKQPEN).

The protein belongs to the polyribonucleotide nucleotidyltransferase family. Mg(2+) is required as a cofactor.

The protein localises to the cytoplasm. It carries out the reaction RNA(n+1) + phosphate = RNA(n) + a ribonucleoside 5'-diphosphate. In terms of biological role, involved in mRNA degradation. Catalyzes the phosphorolysis of single-stranded polyribonucleotides processively in the 3'- to 5'-direction. In Bartonella tribocorum (strain CIP 105476 / IBS 506), this protein is Polyribonucleotide nucleotidyltransferase.